The primary structure comprises 149 residues: Glutamate mutase sigma subunit (149 aa).

Residues 5 to 138 form the B12-binding domain; sequence DPTVVLGTIG…DAVKTELDVD (134 aa). Residues 15–19, His18, 63–65, and 94–98 contribute to the adenosylcob(III)alamin site; these read SDAHA, SSL, and NLAVG.

This sequence belongs to the methylaspartate mutase GlmS subunit family. As to quaternary structure, heterotetramer composed of 2 epsilon subunits (GlmE) and 2 sigma subunits (GlmS). GlmE exists as a homodimer and GlmS as a monomer. The cofactor is adenosylcob(III)alamin.

The enzyme catalyses (2S,3S)-3-methyl-L-aspartate = L-glutamate. Its pathway is amino-acid degradation; L-glutamate degradation via mesaconate pathway; acetate and pyruvate from L-glutamate: step 1/4. Its function is as follows. Catalyzes the carbon skeleton rearrangement of L-glutamate to L-threo-3-methylaspartate ((2S,3S)-3-methylaspartate). This chain is Glutamate mutase sigma subunit, found in Halobacterium salinarum (strain ATCC 700922 / JCM 11081 / NRC-1) (Halobacterium halobium).